Here is a 381-residue protein sequence, read N- to C-terminus: DnaJ-related protein spj1 (381 aa).

The region spanning 5-74 (NFSQKQILGV…RKIYDAYGEE (70 aa)) is the J domain. Positions 72–93 (GEEGLNGQPGGPGGGPGEGFPG) are disordered. A compositionally biased stretch (gly residues) spans 78-93 (GQPGGPGGGPGEGFPG). A CR-type zinc finger spans residues 138–225 (GGSFTLEIPV…CKGERVAEVV (88 aa)). CXXCXGXG motif repeat units follow at residues 151 to 158 (CSVCSGQG), 172 to 179 (CPVCGGSG), 199 to 206 (CNACNGNG), and 213 to 220 (CPRCKGER). Positions 378-381 (FDEL) match the Prevents secretion from ER motif.

It localises to the endoplasmic reticulum. In Schizosaccharomyces pombe (strain 972 / ATCC 24843) (Fission yeast), this protein is DnaJ-related protein spj1 (spj1).